Consider the following 1642-residue polypeptide: Cholesterol transporter ABCA5 (1642 aa).

The helical transmembrane segment at Ser-32–Met-52 threads the bilayer. Residues Asn-86 and Asn-190 are each glycosylated (N-linked (GlcNAc...) asparagine). Transmembrane regions (helical) follow at residues Val-220–Ile-240, Leu-264–Ile-284, Ile-297–Leu-317, Val-327–Leu-347, Leu-355–Met-375, and Leu-396–Tyr-416. Asn-458 carries N-linked (GlcNAc...) asparagine glycosylation. Positions Ile-478–Tyr-713 constitute an ABC transporter 1 domain. Residue Gly-514–Ser-521 participates in ATP binding. A helical membrane pass occupies residues Leu-866–Phe-886. Asn-919 is a glycosylation site (N-linked (GlcNAc...) asparagine). The helical transmembrane segment at Val-967–Ile-987 threads the bilayer. Asn-996 is a glycosylation site (N-linked (GlcNAc...) asparagine). 6 consecutive transmembrane segments (helical) span residues Leu-1021 to Met-1041, Val-1071 to Phe-1091, Phe-1102 to Ile-1122, Phe-1139 to Gly-1159, Ala-1164 to Ile-1184, and Leu-1207 to His-1227. An ABC transporter 2 domain is found at Ile-1290 to Lys-1533. Gly-1333–Ser-1340 contributes to the ATP binding site.

Belongs to the ABC transporter superfamily. ABCA family. In terms of processing, N-glycosylated. In terms of tissue distribution, expressed in testis, epididymis, lung and brain.

It localises to the lysosome membrane. The protein localises to the late endosome membrane. Its subcellular location is the golgi apparatus membrane. The protein resides in the cell membrane. The enzyme catalyses cholesterol(in) + ATP + H2O = cholesterol(out) + ADP + phosphate + H(+). Cholesterol efflux transporter in macrophages that is responsible for APOAI/high-density lipoproteins (HDL) formation at the plasma membrane under high cholesterol levels and participates in reverse cholesterol transport. May play a role in the processing of autolysosomes. The chain is Cholesterol transporter ABCA5 from Rattus norvegicus (Rat).